A 143-amino-acid chain; its full sequence is Small ribosomal subunit protein uS9 (143 aa).

The interval proline 124–arginine 143 is disordered. Residues alanine 134 to arginine 143 show a composition bias toward basic residues.

Belongs to the universal ribosomal protein uS9 family.

This Candida glabrata (strain ATCC 2001 / BCRC 20586 / JCM 3761 / NBRC 0622 / NRRL Y-65 / CBS 138) (Yeast) protein is Small ribosomal subunit protein uS9 (RPS16).